The sequence spans 488 residues: N-acyl-D-glutamate deacylase (488 aa).

Belongs to the metallo-dependent hydrolases superfamily. N-acyl-D-amino-acid deacylase family. It depends on Zn(2+) as a cofactor.

It is found in the cytoplasm. The enzyme catalyses an N-acyl-D-glutamate + H2O = D-glutamate + a carboxylate. With respect to regulation, inhibited by cobalt, copper and EDTA. This is N-acyl-D-glutamate deacylase from Alcaligenes xylosoxydans xylosoxydans (Achromobacter xylosoxidans).